The chain runs to 138 residues: ATP synthase epsilon chain (138 aa).

Belongs to the ATPase epsilon chain family. As to quaternary structure, F-type ATPases have 2 components, CF(1) - the catalytic core - and CF(0) - the membrane proton channel. CF(1) has five subunits: alpha(3), beta(3), gamma(1), delta(1), epsilon(1). CF(0) has three main subunits: a, b and c.

It localises to the cellular thylakoid membrane. Produces ATP from ADP in the presence of a proton gradient across the membrane. This is ATP synthase epsilon chain from Cyanothece sp. (strain PCC 7425 / ATCC 29141).